Here is a 241-residue protein sequence, read N- to C-terminus: Large ribosomal subunit protein uL3 (241 aa).

The tract at residues 140–168 is disordered; it reads SHRSIGSTGGRQDPGKTFKNKKMPGHMGD. The residue at position 151 (Q151) is an N5-methylglutamine.

The protein belongs to the universal ribosomal protein uL3 family. In terms of assembly, part of the 50S ribosomal subunit. Forms a cluster with proteins L14 and L19. Methylated by PrmB.

Functionally, one of the primary rRNA binding proteins, it binds directly near the 3'-end of the 23S rRNA, where it nucleates assembly of the 50S subunit. The protein is Large ribosomal subunit protein uL3 of Azorhizobium caulinodans (strain ATCC 43989 / DSM 5975 / JCM 20966 / LMG 6465 / NBRC 14845 / NCIMB 13405 / ORS 571).